The chain runs to 159 residues: Cyclic pyranopterin monophosphate synthase (159 aa).

Substrate is bound by residues 76 to 78 (LCH) and 114 to 115 (ME). The active site involves aspartate 129.

The protein belongs to the MoaC family. Homohexamer; trimer of dimers.

The catalysed reaction is (8S)-3',8-cyclo-7,8-dihydroguanosine 5'-triphosphate = cyclic pyranopterin phosphate + diphosphate. It participates in cofactor biosynthesis; molybdopterin biosynthesis. Its function is as follows. Catalyzes the conversion of (8S)-3',8-cyclo-7,8-dihydroguanosine 5'-triphosphate to cyclic pyranopterin monophosphate (cPMP). The chain is Cyclic pyranopterin monophosphate synthase from Clostridium botulinum (strain Alaska E43 / Type E3).